The following is a 550-amino-acid chain: Aspartate--tRNA ligase (550 aa).

Glu-162 serves as a coordination point for L-aspartate. The tract at residues 186-189 (QIYK) is aspartate. Arg-208 provides a ligand contact to L-aspartate. ATP contacts are provided by residues 208–210 (RDE) and Gln-217. His-417 is a binding site for L-aspartate. Position 451 (Glu-451) interacts with ATP. L-aspartate is bound at residue Arg-458. 499–502 (GIDR) provides a ligand contact to ATP.

It belongs to the class-II aminoacyl-tRNA synthetase family. Type 1 subfamily. Homodimer.

The protein localises to the cytoplasm. The catalysed reaction is tRNA(Asp) + L-aspartate + ATP = L-aspartyl-tRNA(Asp) + AMP + diphosphate. Catalyzes the attachment of L-aspartate to tRNA(Asp) in a two-step reaction: L-aspartate is first activated by ATP to form Asp-AMP and then transferred to the acceptor end of tRNA(Asp). This Mycoplasma genitalium (strain ATCC 33530 / DSM 19775 / NCTC 10195 / G37) (Mycoplasmoides genitalium) protein is Aspartate--tRNA ligase.